The following is a 199-amino-acid chain: 7-methyl-GTP pyrophosphatase (199 aa).

The active-site Proton acceptor is the D76.

The protein belongs to the Maf family. YceF subfamily. Requires a divalent metal cation as cofactor.

Its subcellular location is the cytoplasm. It carries out the reaction N(7)-methyl-GTP + H2O = N(7)-methyl-GMP + diphosphate + H(+). In terms of biological role, nucleoside triphosphate pyrophosphatase that hydrolyzes 7-methyl-GTP (m(7)GTP). May have a dual role in cell division arrest and in preventing the incorporation of modified nucleotides into cellular nucleic acids. The chain is 7-methyl-GTP pyrophosphatase from Rhizobium meliloti (strain 1021) (Ensifer meliloti).